The following is a 66-amino-acid chain: Conotoxin Cl14.1a (66 aa).

Residues 1–19 form the signal peptide; the sequence is MNVTAMFIVLLLTMPLTDG. Residues 20 to 49 constitute a propeptide that is removed on maturation; that stretch reads FNIRAINGGELFGLVQRDAGNALDHGFYRR.

This sequence belongs to the conotoxin L superfamily. In terms of processing, contains 2 disulfide bonds. Expressed by the venom duct.

Its subcellular location is the secreted. In terms of biological role, probable neurotoxin with unknown target. Possibly targets ion channels. This peptide could be considered as an apoptosis activator in some cancers (tested on lung and breast cancer cell lines). Provokes the decrease of H1299 lung cancer cells viability after 24 hours treatment, and induces a high Bax/Bcl-2 ratio, which suggests that this peptide can activate apoptosis in H1299 cells. In addition, H1299 and H1437 lung cancer cell lines treated with this peptide have decreased cell viability, activated caspases, and reduced expression of the pro-survival protein NF-kappa-B (NFKB1), indicating activation of apoptosis. In synergy with MicroRNA-101-3p, this synthetic peptide inhibits breast cancer cells (SK-BR-3 and MCF-7) migration, invasion, and proliferation through suppressing the expression of the methyltransferase EZH2. In parallel, this synergy treatment is able to promote the apoptosis of breast cancer cells. Against microbes, this synthetic toxin (at micromolar concentrations) lowers viability and inhibits host cell invasion by the opportunistic parasite Toxoplasma gondii (tachyzoite form). In addition, it permits T.gondii intracellular replication to decrease while viability of the host cell is unaffected. This Californiconus californicus (California cone) protein is Conotoxin Cl14.1a.